The primary structure comprises 64 residues: DNA-binding protein 7a (64 aa).

This sequence belongs to the 7 kDa DNA-binding/endoribonuclease P2 family. As to quaternary structure, monomer.

It is found in the cytoplasm. In terms of biological role, can constrain negative DNA supercoils. May be involved in maintaining the integrity of the genome at high temperature. The sequence is that of DNA-binding protein 7a from Saccharolobus islandicus (strain L.D.8.5 / Lassen #2) (Sulfolobus islandicus).